Reading from the N-terminus, the 274-residue chain is MGTDSRAAKALLARARTLHLQTGNLLNWGRLRKKCPSTHSEELHDCIQKTLNEWSSQINPDLVREFPDVLECTVSHAVEKINPDEREEMKVSAKLFIVESNSSSSTRSAVDMACSVLGVAQLDSVIIASPPIEDGVNLSLEHLQPYWEELENLVQSKKIVAIGTSDLDKTQLEQLYQWAQVKPNSNQVNLASCCVMPPDLTAFAKQFDIQLLTHNDPKELLSEASFQEALQESIPDIQAHEWVPLWLLRYSVIVKSRGIIKSKGYILQAKRRGS.

Position 263 is an N6-acetyllysine (K263).

This sequence belongs to the aldo/keto reductase family. Glutamate--cysteine ligase light chain subfamily. Heterodimer of a catalytic heavy chain and a regulatory light chain. In terms of tissue distribution, in all tissues examined. Highest levels in skeletal muscle.

The protein operates within sulfur metabolism; glutathione biosynthesis; glutathione from L-cysteine and L-glutamate: step 1/2. In Homo sapiens (Human), this protein is Glutamate--cysteine ligase regulatory subunit (GCLM).